Consider the following 493-residue polypeptide: Probable cytosol aminopeptidase (493 aa).

Positions 257 and 262 each coordinate Mn(2+). Lysine 269 is an active-site residue. 3 residues coordinate Mn(2+): aspartate 280, aspartate 339, and glutamate 341. Arginine 343 is a catalytic residue.

It belongs to the peptidase M17 family. Mn(2+) is required as a cofactor.

The protein localises to the cytoplasm. The enzyme catalyses Release of an N-terminal amino acid, Xaa-|-Yaa-, in which Xaa is preferably Leu, but may be other amino acids including Pro although not Arg or Lys, and Yaa may be Pro. Amino acid amides and methyl esters are also readily hydrolyzed, but rates on arylamides are exceedingly low.. It catalyses the reaction Release of an N-terminal amino acid, preferentially leucine, but not glutamic or aspartic acids.. In terms of biological role, presumably involved in the processing and regular turnover of intracellular proteins. Catalyzes the removal of unsubstituted N-terminal amino acids from various peptides. The protein is Probable cytosol aminopeptidase (pepA) of Aquifex aeolicus (strain VF5).